The following is an 87-amino-acid chain: Small ribosomal subunit protein uS15c (87 aa).

It belongs to the universal ribosomal protein uS15 family. As to quaternary structure, part of the 30S ribosomal subunit.

The protein localises to the plastid. The protein resides in the chloroplast. The protein is Small ribosomal subunit protein uS15c (rps15) of Coffea arabica (Arabian coffee).